Here is a 262-residue protein sequence, read N- to C-terminus: Probable ketoamine kinase TTHA1179 (262 aa).

79 to 81 lines the ATP pocket; it reads AYL. Residue Asp172 is the Proton acceptor of the active site.

The protein belongs to the fructosamine kinase family.

It catalyses the reaction N(6)-(D-ribulosyl)-L-lysine + ATP = N(6)-(3-O-phospho-D-ribulosyl)-L-lysine + ADP + H(+). The enzyme catalyses N(6)-(D-erythrulosyl)-L-lysine + ATP = N(6)-(3-O-phospho-D-erythrulosyl)-L-lysine + ADP + H(+). It carries out the reaction N(6)-D-ribulosyl-L-lysyl-[protein] + ATP = N(6)-(3-O-phospho-D-ribulosyl)-L-lysyl-[protein] + ADP + H(+). The catalysed reaction is N(6)-(D-erythrulosyl)-L-lysyl-[protein] + ATP = N(6)-(3-O-phospho-D-erythrulosyl)-L-lysyl-[protein] + ADP + H(+). Functionally, ketoamine kinase that phosphorylates ketoamines, such as erythruloselysine and ribuloselysine, on the third carbon of the sugar moiety to generate ketoamine 3-phosphate. Has higher activity on free lysine (erythruloselysine and ribuloselysine), than on ribuloselysine and erythruloselysine residues on glycated proteins. This is Probable ketoamine kinase TTHA1179 from Thermus thermophilus (strain ATCC 27634 / DSM 579 / HB8).